Reading from the N-terminus, the 256-residue chain is Phosphate import ATP-binding protein PstB (256 aa).

Residues 10 to 251 (IRTVNVNFYY…PEQKQTEDYI (242 aa)) form the ABC transporter domain. 42–49 (GPSGCGKS) provides a ligand contact to ATP.

The protein belongs to the ABC transporter superfamily. Phosphate importer (TC 3.A.1.7) family. As to quaternary structure, the complex is composed of two ATP-binding proteins (PstB), two transmembrane proteins (PstC and PstA) and a solute-binding protein (PstS).

Its subcellular location is the cell inner membrane. It carries out the reaction phosphate(out) + ATP + H2O = ADP + 2 phosphate(in) + H(+). Part of the ABC transporter complex PstSACB involved in phosphate import. Responsible for energy coupling to the transport system. The chain is Phosphate import ATP-binding protein PstB from Syntrophus aciditrophicus (strain SB).